The sequence spans 451 residues: Gamma-aminobutyric acid receptor subunit alpha-2 (451 aa).

The signal sequence occupies residues 1-28 (MKTKLSTCNVWSLLLVLLVWDPVRLVLA). The Extracellular segment spans residues 29–249 (NIQEDEAKNN…MTAHFHLKRK (221 aa)). The N-linked (GlcNAc...) asparagine glycan is linked to Asn-38. Position 94 (Arg-94) interacts with 4-aminobutanoate. N-linked (GlcNAc...) asparagine glycosylation occurs at Asn-138. Residue Thr-157 coordinates 4-aminobutanoate. Cys-166 and Cys-180 are oxidised to a cystine. The chain crosses the membrane as a helical span at residues 250-270 (IGYFVIQTYLPCIMTVILSQV). The Cytoplasmic segment spans residues 271-280 (SFWLNRESVP). Residues 281–300 (ARTVFGVTTVLTMTTLSISA) form a helical membrane-spanning segment. At 301–311 (RNSLPKVAYAT) the chain is on the extracellular side. The helical transmembrane segment at 312-332 (AMDWFIAVCYAFVFSALIEFA) threads the bilayer. Residues 333–420 (TVNYFTKRGW…FNSVSKIDRM (88 aa)) lie on the Cytoplasmic side of the membrane. The segment at 389 to 408 (KSATTPEPNKKPENKPAEAK) is disordered. Positions 396-408 (PNKKPENKPAEAK) are enriched in basic and acidic residues. The chain crosses the membrane as a helical span at residues 421 to 441 (SRIVFPVLFGTFNLVYWATYL). Residues 442 to 451 (NREPVLGVSP) lie on the Extracellular side of the membrane.

Belongs to the ligand-gated ion channel (TC 1.A.9) family. Gamma-aminobutyric acid receptor (TC 1.A.9.5) subfamily. GABRA2 sub-subfamily. In terms of assembly, heteropentamer, formed by a combination of alpha (GABRA1-6), beta (GABRB1-3), gamma (GABRG1-3), delta (GABRD), epsilon (GABRE), rho (GABRR1-3), pi (GABRP) and theta (GABRQ) subunits, each subunit exhibiting distinct physiological and pharmacological properties. Interacts with UBQLN1. Interacts with KIF21B. Interacts with LHFPL4. Interacts with SHISA7; interaction leads to the regulation of GABA(A) receptor trafficking, channel deactivation kinetics and pharmacology. Glycosylated.

It is found in the postsynaptic cell membrane. The protein resides in the cell membrane. The protein localises to the cytoplasmic vesicle membrane. It localises to the cell projection. Its subcellular location is the dendrite. The enzyme catalyses chloride(in) = chloride(out). Activated by pentobarbital. Inhibited by the antagonist bicuculline. Alpha subunit of the heteropentameric ligand-gated chloride channel gated by gamma-aminobutyric acid (GABA), a major inhibitory neurotransmitter in the brain. GABA-gated chloride channels, also named GABA(A) receptors (GABAAR), consist of five subunits arranged around a central pore and contain GABA active binding site(s) located at the alpha and beta subunit interface(s). When activated by GABA, GABAARs selectively allow the flow of chloride anions across the cell membrane down their electrochemical gradient. Chloride influx into the postsynaptic neuron following GABAAR opening decreases the neuron ability to generate a new action potential, thereby reducing nerve transmission. The alpha-2 subunit exhibits synaptogenic activity together with beta-2 and very little to no activity together with beta-3, the gamma-2 subunit being necessary but not sufficient to induce rapid synaptic contacts formation. In Mus musculus (Mouse), this protein is Gamma-aminobutyric acid receptor subunit alpha-2.